The sequence spans 536 residues: Zinc finger protein 394 (536 aa).

Residues 18-45 are disordered; it reads AVKVEEDSPGSQEPSGSGDWQNPETSRK. A Glycyl lysine isopeptide (Lys-Gly) (interchain with G-Cter in SUMO2) cross-link involves residue Lys-20. Positions 26-41 are enriched in polar residues; the sequence is PGSQEPSGSGDWQNPE. Residues 44–126 enclose the SCAN box domain; the sequence is RKQFRQLRYQ…ALARTLQRAL (83 aa). Residues 135-196 enclose the KRAB domain; that stretch reads ATFKDVAESL…KQEMSKEAES (62 aa). Glycyl lysine isopeptide (Lys-Gly) (interchain with G-Cter in SUMO2) cross-links involve residues Lys-207 and Lys-260. C2H2-type zinc fingers lie at residues 328-350, 356-378, and 384-406; these read YKCD…QRTH, YQCQ…QRTH, and YACP…QRTH. The C2H2-type 4; atypical zinc-finger motif lies at 412 to 433; the sequence is CKCEECGEIFHISSLFKHQRLH. Lys-413 is covalently cross-linked (Glycyl lysine isopeptide (Lys-Gly) (interchain with G-Cter in SUMO2)). 3 consecutive C2H2-type zinc fingers follow at residues 439–461, 467–489, and 495–517; these read HKCE…QRIH, YMCF…QRTH, and YKCF…QRIH.

Belongs to the krueppel C2H2-type zinc-finger protein family.

The protein localises to the nucleus. Functionally, may be involved in transcriptional regulation. The sequence is that of Zinc finger protein 394 (Znf394) from Rattus norvegicus (Rat).